The primary structure comprises 383 residues: MRLLKSNSLLRLVNSYLVDSPQPGNLSYMWNFGSLLAVCLVIQILTGCFLAMHYTAHVDLAFNSVEHIMRDVNNGWLIRYTHANVASFFFIFVYCHIARGLYYGSFKEPRTLTWSIGVIILILMMAIAFLGYVLPFGQMSLWGATVITNLMSAIPVYGQDIVELIWGGFSVSNATLNRFFSLHYILPFLLAALAVAHMIALHVHGSGNPNGLNAGDDRFPMHPYFIFKDLVTIFAFLLVLSIFVCFYPNALGHSDNYIPANPMVTPASIVPEWYLLPFYAILRSIPNKLLGVIAMFGSLLILLVLPLTDLSRVRGNQFRPLMKLSFWFFVVDFIILMWIGAEHPASPYLEVGQIATAFYFAWFVFIVPAVGLFENTMADINKL.

Transmembrane regions (helical) follow at residues 32–52 (FGSLLAVCLVIQILTGCFLAM), 76–98 (WLIRYTHANVASFFFIFVYCHIA), 113–133 (TWSIGVIILILMMAIAFLGYV), and 179–199 (FFSLHYILPFLLAALAVAHMI). 2 residues coordinate heme b: histidine 82 and histidine 96. Histidine 183 and histidine 197 together coordinate heme b. Histidine 202 serves as a coordination point for a ubiquinone. A run of 4 helical transmembrane segments spans residues 225-245 (FIFKDLVTIFAFLLVLSIFVC), 289-309 (LLGVIAMFGSLLILLVLPLTD), 321-341 (LMKLSFWFFVVDFIILMWIGA), and 348-368 (YLEVGQIATAFYFAWFVFIVP).

It belongs to the cytochrome b family. As to quaternary structure, fungal cytochrome b-c1 complex contains 10 subunits; 3 respiratory subunits, 2 core proteins and 5 low-molecular weight proteins. Cytochrome b-c1 complex is a homodimer. The cofactor is heme b.

The protein resides in the mitochondrion inner membrane. In terms of biological role, component of the ubiquinol-cytochrome c reductase complex (complex III or cytochrome b-c1 complex) that is part of the mitochondrial respiratory chain. The b-c1 complex mediates electron transfer from ubiquinol to cytochrome c. Contributes to the generation of a proton gradient across the mitochondrial membrane that is then used for ATP synthesis. This is Cytochrome b (cob) from Schizophyllum commune (Split gill fungus).